We begin with the raw amino-acid sequence, 108 residues long: Protein RnfH (108 aa).

Belongs to the UPF0125 (RnfH) family.

The protein is Protein RnfH of Laribacter hongkongensis (strain HLHK9).